A 499-amino-acid polypeptide reads, in one-letter code: Bifunctional purine biosynthesis protein PurH (499 aa).

The 144-residue stretch at 1 to 144 folds into the MGS-like domain; the sequence is MIKRALISVF…KNFKDVVVLT (144 aa).

This sequence belongs to the PurH family.

It carries out the reaction (6R)-10-formyltetrahydrofolate + 5-amino-1-(5-phospho-beta-D-ribosyl)imidazole-4-carboxamide = 5-formamido-1-(5-phospho-D-ribosyl)imidazole-4-carboxamide + (6S)-5,6,7,8-tetrahydrofolate. The enzyme catalyses IMP + H2O = 5-formamido-1-(5-phospho-D-ribosyl)imidazole-4-carboxamide. It participates in purine metabolism; IMP biosynthesis via de novo pathway; 5-formamido-1-(5-phospho-D-ribosyl)imidazole-4-carboxamide from 5-amino-1-(5-phospho-D-ribosyl)imidazole-4-carboxamide (10-formyl THF route): step 1/1. It functions in the pathway purine metabolism; IMP biosynthesis via de novo pathway; IMP from 5-formamido-1-(5-phospho-D-ribosyl)imidazole-4-carboxamide: step 1/1. This chain is Bifunctional purine biosynthesis protein PurH, found in Clostridium botulinum (strain 657 / Type Ba4).